Consider the following 232-residue polypeptide: uncharacterized protein (232 aa).

The disordered stretch occupies residues 119-145 (DEEYRENSKAPEAKARPSFVGEGRRLG). The span at 123 to 133 (RENSKAPEAKA) shows a compositional bias: basic and acidic residues.

This is an uncharacterized protein from Encephalitozoon cuniculi (strain GB-M1) (Microsporidian parasite).